The sequence spans 851 residues: Thrombospondin type-1 domain-containing protein 1 (851 aa).

The signal sequence occupies residues 1-24; sequence MKPMLKDFSNLLLVVLCDYVLGEA. The Extracellular segment spans residues 25-412; it reads EYLLLQEPVH…SPQDPVKSNN (388 aa). 6 N-linked (GlcNAc...) asparagine glycosylation sites follow: N53, N58, N69, N110, N135, and N304. The 54-residue stretch at 339–392 folds into the TSP type-1 domain; sequence IETWGPWQPWSPCSTTCGDAVRERRRLCVTSFPSRPSCSGMSSETSPCSLEECA. 3 cysteine pairs are disulfide-bonded: C351/C386, C355/C391, and C366/C376. The chain crosses the membrane as a helical span at residues 413-433; the sequence is VVTVTGISLCLFIIFATVLIT. The Cytoplasmic segment spans residues 434 to 851; that stretch reads LWRRFGRAPK…STLSVEKLVI (418 aa). Phosphoserine is present on S462. Disordered stretches follow at residues 471 to 516, 626 to 646, and 682 to 777; these read SEPR…ESFQ, KSQI…HSRS, and SRMR…SSPI. Positions 685-695 are enriched in basic and acidic residues; the sequence is RTWDQMEDRCR. Residues 765–776 are compositionally biased toward polar residues; the sequence is SHRSASRKQSSP.

As to quaternary structure, part of a complex composed of THSD1, PTK2/FAK1, TLN1 and VCL. Interacts with TLN1. In terms of tissue distribution, expressed in cerebral vascular endothelium.

It localises to the endosome membrane. It is found in the cell junction. The protein localises to the focal adhesion. Is a positive regulator of nascent focal adhesion assembly, involved in the modulation of endothelial cell attachment to the extracellular matrix. This is Thrombospondin type-1 domain-containing protein 1 (Thsd1) from Mus musculus (Mouse).